Here is a 275-residue protein sequence, read N- to C-terminus: Secreted RxLR effector protein 153 (275 aa).

The first 27 residues, 1–27, serve as a signal peptide directing secretion; sequence MRNRAFLFGLFFIEYACLVLFAAPTRA. The N-linked (GlcNAc...) asparagine glycan is linked to Asn45. The RxLR-dEER signature appears at 48–63; sequence RTLQADDSKRISAEER.

This sequence belongs to the RxLR effector family.

The protein localises to the secreted. Its subcellular location is the host cell membrane. Its function is as follows. Secreted effector that completely suppresses the host cell death induced by cell death-inducing proteins. The chain is Secreted RxLR effector protein 153 from Plasmopara viticola (Downy mildew of grapevine).